The sequence spans 311 residues: Cytosolic Fe-S cluster assembly factor Nubp1 homolog (311 aa).

A disordered region spans residues 1-21; it reads MQAPPPEHCPGVESEEAGKGS. Residues Cys9, Cys23, Cys26, and Cys32 each contribute to the [4Fe-4S] cluster site. An ATP-binding site is contributed by 63–70; that stretch reads GKGGVGKS. Residues Cys240 and Cys243 each coordinate [4Fe-4S] cluster.

It belongs to the Mrp/NBP35 ATP-binding proteins family. NUBP1/NBP35 subfamily. In terms of assembly, heterotetramer of 2 Nubp1 and 2 Nubp2 chains. [4Fe-4S] cluster is required as a cofactor.

It is found in the cytoplasm. Its function is as follows. Component of the cytosolic iron-sulfur (Fe/S) protein assembly (CIA) machinery. Required for maturation of extramitochondrial Fe-S proteins. The Nubp1-Nubp2 heterotetramer forms a Fe-S scaffold complex, mediating the de novo assembly of an Fe-S cluster and its transfer to target apoproteins. This chain is Cytosolic Fe-S cluster assembly factor Nubp1 homolog, found in Drosophila melanogaster (Fruit fly).